A 160-amino-acid polypeptide reads, in one-letter code: Small ribosomal subunit protein bS16 (160 aa).

The tract at residues 115–139 (GGPTTEATRPKKKVSAKKAAKAVES) is disordered. A compositionally biased stretch (basic residues) spans 124–134 (PKKKVSAKKAA).

This sequence belongs to the bacterial ribosomal protein bS16 family.

The protein is Small ribosomal subunit protein bS16 of Mycobacterium leprae (strain Br4923).